A 61-amino-acid chain; its full sequence is Small ribosomal subunit protein uS14 (61 aa).

Positions 24, 27, 40, and 43 each coordinate Zn(2+).

The protein belongs to the universal ribosomal protein uS14 family. Zinc-binding uS14 subfamily. As to quaternary structure, part of the 30S ribosomal subunit. Contacts proteins S3 and S10. Zn(2+) is required as a cofactor.

Its function is as follows. Binds 16S rRNA, required for the assembly of 30S particles and may also be responsible for determining the conformation of the 16S rRNA at the A site. The chain is Small ribosomal subunit protein uS14 from Roseiflexus sp. (strain RS-1).